A 459-amino-acid polypeptide reads, in one-letter code: tRNA-guanine(15) transglycosylase (459 aa).

Aspartate 90 functions as the Nucleophile in the catalytic mechanism. 2 residues coordinate substrate: aspartate 125 and glycine 192. Zn(2+)-binding residues include cysteine 275, cysteine 277, and cysteine 280.

This sequence belongs to the archaeosine tRNA-ribosyltransferase family. The cofactor is Zn(2+).

It catalyses the reaction guanosine(15) in tRNA + 7-cyano-7-deazaguanine = 7-cyano-7-carbaguanosine(15) in tRNA + guanine. It functions in the pathway tRNA modification; archaeosine-tRNA biosynthesis. Functionally, exchanges the guanine residue with 7-cyano-7-deazaguanine (preQ0) at position 15 in the dihydrouridine loop (D-loop) of archaeal tRNAs. This is tRNA-guanine(15) transglycosylase from Methanopyrus kandleri (strain AV19 / DSM 6324 / JCM 9639 / NBRC 100938).